The sequence spans 341 residues: MNIEDFDYHLPESLIAQTPLKNRDQSRLLVLSKDTGELTHLHFRDVIHYFEPGDTLVLNDTRVMPARLFGLKEETGAKVEMLMLTQIEGNDWEVLLKPAKRIKKGHRLNFGDGKIVAECIEELEQGGRIMRLHYEGILQERLDELGDMPLPPYIKERLDDPDRYQTVYAKESGSAAAPTAGLHFTDDLLNKIKQKGVHIAFITLHVGLGTFRPVSVENIDDHEMHSEYYQMTQETADLLNKTKESGKRVISVGTTSTRTLETIRRDHPQFVATSGWTDIFIYPGFEFKAIDGLITNFHLPKSTLVMLVSAFSNKKYILNAYHKAVEMEYRFFSFGDAMLII.

Belongs to the QueA family. Monomer.

It localises to the cytoplasm. The catalysed reaction is 7-aminomethyl-7-carbaguanosine(34) in tRNA + S-adenosyl-L-methionine = epoxyqueuosine(34) in tRNA + adenine + L-methionine + 2 H(+). It participates in tRNA modification; tRNA-queuosine biosynthesis. Transfers and isomerizes the ribose moiety from AdoMet to the 7-aminomethyl group of 7-deazaguanine (preQ1-tRNA) to give epoxyqueuosine (oQ-tRNA). The protein is S-adenosylmethionine:tRNA ribosyltransferase-isomerase of Staphylococcus epidermidis (strain ATCC 35984 / DSM 28319 / BCRC 17069 / CCUG 31568 / BM 3577 / RP62A).